The sequence spans 631 residues: 1-deoxy-D-xylulose-5-phosphate synthase (631 aa).

Residues histidine 87 and 128–130 contribute to the thiamine diphosphate site; that span reads GHS. Aspartate 159 contributes to the Mg(2+) binding site. Thiamine diphosphate is bound by residues 160-161, asparagine 188, phenylalanine 295, and glutamate 377; that span reads GA. Asparagine 188 is a Mg(2+) binding site.

It belongs to the transketolase family. DXPS subfamily. Homodimer. Requires Mg(2+) as cofactor. The cofactor is thiamine diphosphate.

It carries out the reaction D-glyceraldehyde 3-phosphate + pyruvate + H(+) = 1-deoxy-D-xylulose 5-phosphate + CO2. Its pathway is metabolic intermediate biosynthesis; 1-deoxy-D-xylulose 5-phosphate biosynthesis; 1-deoxy-D-xylulose 5-phosphate from D-glyceraldehyde 3-phosphate and pyruvate: step 1/1. Catalyzes the acyloin condensation reaction between C atoms 2 and 3 of pyruvate and glyceraldehyde 3-phosphate to yield 1-deoxy-D-xylulose-5-phosphate (DXP). The protein is 1-deoxy-D-xylulose-5-phosphate synthase of Pseudomonas putida (strain W619).